A 390-amino-acid chain; its full sequence is MFELSTIYAAFERYFGKPPTRIARAPGRVNLIGEHTDYNDGFVFPMALDRATYVAARPRDDRIVRVFSVKFRDEDQFDLDHIVRDTQRQWVNYIRGVAKGLLARDLPLRGADLLIDSDVPSGSGLSSSAALEVAVGYTFQLLNQINLLGEELALLAQGAEHSFVGVKCGIMDQLIAALGEAGHALLIDCRDLSYRPIPIPTGVRVVVCDSGVRHRLAGSEYNQRRAGCEEAVRILRPALGKIQALRDVRSTDLAEYGHLLPPELLPLVRHVVSENERTLAAADALAAGDVVKMGQLMVESHQSLRDDYCVSIAELDTLVDLALAAPGCYGSRMTGGGFGGSTVSLVEAEKVDEFVAAMIAGYAIRTGRTLQPLVCTAGAGVSCVYASEEE.

Substrate is bound at residue 34 to 37; it reads EHTD. Residues Ser-68 and 122-128 each bind ATP; that span reads GSGLSSS. The Mg(2+) site is built by Ser-128 and Glu-160. The active-site Proton acceptor is Asp-172. Tyr-221 contributes to the substrate binding site.

This sequence belongs to the GHMP kinase family. GalK subfamily.

It localises to the cytoplasm. The catalysed reaction is alpha-D-galactose + ATP = alpha-D-galactose 1-phosphate + ADP + H(+). The protein operates within carbohydrate metabolism; galactose metabolism. Its function is as follows. Catalyzes the transfer of the gamma-phosphate of ATP to D-galactose to form alpha-D-galactose-1-phosphate (Gal-1-P). The chain is Galactokinase from Chloroflexus aggregans (strain MD-66 / DSM 9485).